Here is a 308-residue protein sequence, read N- to C-terminus: Olfactory receptor OR9H1 (308 aa).

Over 1–26 (MVNFTHVSEFVLLGFQGGPGMQAMLF) the chain is Extracellular. The helical transmembrane segment at 27-47 (LIFLILYGIAVVGNLGMIVII) threads the bilayer. The Cytoplasmic portion of the chain corresponds to 48-58 (WVDAHLHTPMY). The chain crosses the membrane as a helical span at residues 59–81 (AFLQSLSLLDICYSSTIAPRALA). At 82-95 (NSMQEDHTISFGGC) the chain is on the extracellular side. Cys95 and Cys177 form a disulfide bridge. Residues 96–116 (AAQFFFLSLFGITEAFLLAAM) form a helical membrane-spanning segment. Over 117-137 (AYDRFIAICNPLLYSVSMSHQ) the chain is Cytoplasmic. Residues 138–158 (VCVLLISGSYLWGVVNAIAQT) traverse the membrane as a helical segment. The Extracellular portion of the chain corresponds to 159–203 (TMTFRLPFCGSNEINDFFCDVPPLLSLSCSDTFINQLVLLGLCGS). A helical transmembrane segment spans residues 204 to 224 (IIVSTFLIVLVSYIYIISTIL). At 225 to 245 (RIPTMQGCQKAFSTCASHLTG) the chain is on the cytoplasmic side. A helical membrane pass occupies residues 246-266 (VCLFFGTVFFMYAQPSAIFFM). Residues 267–269 (EQS) lie on the Extracellular side of the membrane. A helical transmembrane segment spans residues 270–290 (KIVSIFYTMVIPMLNPLIYSL). Residues 291-308 (RNKEVKQALRRSMQKLSL) lie on the Cytoplasmic side of the membrane.

The protein belongs to the G-protein coupled receptor 1 family.

It is found in the cell membrane. Functionally, odorant receptor. This chain is Olfactory receptor OR9H1, found in Homo sapiens (Human).